Reading from the N-terminus, the 204-residue chain is Rho GDP-dissociation inhibitor 1 (204 aa).

Residues 1 to 36 (MAEQEPTAEQLAQIAAENEEDEHSVNYKPPAQKSIQ) form a disordered region. At Ala2 the chain carries N-acetylalanine. A Phosphoserine modification is found at Ser34. Residue Lys43 is modified to N6-acetyllysine. Ser47 carries the phosphoserine modification. The segment at 66–83 (NVPNVVVTRLTLVCSTAP) is hydrophobic. At Ser101 the chain carries Phosphoserine; by PKA. Lys105 carries the post-translational modification N6-acetyllysine. Phosphoserine; by PKC is present on Ser115. Lys127 carries the N6-acetyllysine modification. Residues Lys138 and Lys141 each participate in a glycyl lysine isopeptide (Lys-Gly) (interchain with G-Cter in SUMO1); alternate cross-link. Glycyl lysine isopeptide (Lys-Gly) (interchain with G-Cter in SUMO2); alternate cross-links involve residues Lys138 and Lys141. The residue at position 141 (Lys141) is an N6-acetyllysine; alternate. The residue at position 141 (Lys141) is an N6-succinyllysine; alternate. At Lys178 the chain carries N6-acetyllysine.

The protein belongs to the Rho GDI family. As to quaternary structure, monomer. Interacts with FER. Interacts with PLXNB3. Forms a heterodimer with RAC1. Interacts with RHOA, the affinity is increased by three orders of magnitude when RHOA is prenylated. Interacts with PSMD10; the interaction increases ARHGDIA association with RHOA, leading to ARHGDIA-mediated inactivation of RHOA and ROCK and prolonged AKT activation. Interacts with KANK2; the interaction is direct and may regulate the interaction of ARHGDIA with RHOA, RAC1 and CDC42. Interacts with RHOC. Interacts with CDC42. Interacts with NGFR (via death domain); NGFR binding decreases the affinity for RHOA. In terms of tissue distribution, brain, lung, thymus, spleen, small intestine, and kidney, and weakly in heart and liver.

It is found in the cytoplasm. Functionally, controls Rho proteins homeostasis. Regulates the GDP/GTP exchange reaction of the Rho proteins by inhibiting the dissociation of GDP from them, and the subsequent binding of GTP to them. Retains Rho proteins such as CDC42, RAC1 and RHOA in an inactive cytosolic pool, regulating their stability and protecting them from degradation. Actively involved in the recycling and distribution of activated Rho GTPases in the cell, mediates extraction from membranes of both inactive and activated molecules due its exceptionally high affinity for prenylated forms. Through the modulation of Rho proteins, may play a role in cell motility regulation. In glioma cells, inhibits cell migration and invasion by mediating the signals of SEMA5A and PLXNB3 that lead to inactivation of RAC1. In Bos taurus (Bovine), this protein is Rho GDP-dissociation inhibitor 1 (ARHGDIA).